Reading from the N-terminus, the 167-residue chain is Probable tail fiber assembly protein (167 aa).

It belongs to the tfa family.

Chaperone involved in tail fiber assembly. The protein is Probable tail fiber assembly protein (22) of Shigella phage SfV (Shigella flexneri bacteriophage V).